The chain runs to 383 residues: Neuropeptide Y receptor type 1 (383 aa).

The Extracellular segment spans residues Met1 to Ala44. N-linked (GlcNAc...) asparagine glycans are attached at residues Asn2, Asn11, and Asn17. The helical transmembrane segment at Leu45–Ile65 threads the bilayer. The Cytoplasmic segment spans residues Leu66–Asn76. The helical transmembrane segment at Ile77–Thr97 threads the bilayer. At Phe98–Asn116 the chain is on the extracellular side. Residues Cys113 and Cys198 are joined by a disulfide bond. Residues Pro117–Glu137 form a helical membrane-spanning segment. At Arg138–His154 the chain is on the cytoplasmic side. Residues Ala155–Ile175 form a helical membrane-spanning segment. Residues Tyr176–Tyr211 lie on the Extracellular side of the membrane. Residue Asn186 is glycosylated (N-linked (GlcNAc...) asparagine). A helical transmembrane segment spans residues Thr212–Phe232. Topologically, residues Lys233–Arg260 are cytoplasmic. Residues Ile261–Ile281 form a helical membrane-spanning segment. Topologically, residues Phe282–Asn299 are extracellular. The helical transmembrane segment at Leu300–Tyr320 threads the bilayer. Topologically, residues Gly321 to Ile383 are cytoplasmic. A lipid anchor (S-palmitoyl cysteine) is attached at Cys338. Ser368 is subject to Phosphoserine.

Belongs to the G-protein coupled receptor 1 family.

The protein localises to the cell membrane. Receptor for neuropeptide Y and peptide YY. This Bos taurus (Bovine) protein is Neuropeptide Y receptor type 1 (NPY1R).